A 430-amino-acid chain; its full sequence is Glutamate-1-semialdehyde 2,1-aminomutase (430 aa).

An N6-(pyridoxal phosphate)lysine modification is found at Lys270.

The protein belongs to the class-III pyridoxal-phosphate-dependent aminotransferase family. HemL subfamily. Homodimer. Pyridoxal 5'-phosphate is required as a cofactor.

Its subcellular location is the cytoplasm. It carries out the reaction (S)-4-amino-5-oxopentanoate = 5-aminolevulinate. The protein operates within porphyrin-containing compound metabolism; protoporphyrin-IX biosynthesis; 5-aminolevulinate from L-glutamyl-tRNA(Glu): step 2/2. The sequence is that of Glutamate-1-semialdehyde 2,1-aminomutase from Cupriavidus necator (strain ATCC 17699 / DSM 428 / KCTC 22496 / NCIMB 10442 / H16 / Stanier 337) (Ralstonia eutropha).